We begin with the raw amino-acid sequence, 1164 residues long: Auxin response factor 7 (1164 aa).

A DNA-binding region (TF-B3) is located at residues 127 to 229 (FCKTLTASDT…QLLLGIRRAN (103 aa)). Disordered regions lie at residues 451-505 (HNNL…QQQL), 536-555 (QQLQ…QQQQ), 570-728 (HQQP…LLQQ), 765-858 (FLSP…SSSG), and 903-930 (KSKA…GENN). A compositionally biased stretch (polar residues) spans 464–489 (LSFQTPHGGISSSNLQFNKQNQQAPM). The segment covering 570–635 (HQQPLQQQTQ…SQQASTHHLQ (66 aa)) has biased composition (low complexity). Residues 637–651 (QLVSGSMASSVITPP) show a composition bias toward polar residues. Positions 652–671 (SSSLNQSFQQQQQQSKQLQQ) are enriched in low complexity. Positions 678–710 (ASTSQSSVIETSKSSSNLMSAPPQETQFSRQVE) are enriched in polar residues. 2 stretches are compositionally biased toward low complexity: residues 711–728 (QQQP…LLQQ) and 765–790 (FLSP…TLSQ). Residues 791–808 (GHQFPSSCTNNGLSTLQP) show a composition bias toward polar residues. Residues 841–851 (PSSSTSPSTNN) are compositionally biased toward low complexity. Positions 903 to 921 (KSKASLTDHQLEASASGTS) are enriched in polar residues. The 94-residue stretch at 1037 to 1130 (RTYTKVQKRG…EVQQMSLDGN (94 aa)) folds into the PB1 domain. A disordered region spans residues 1145–1164 (DSGNAWRGHYDDNSATSFNR).

The protein belongs to the ARF family. As to quaternary structure, homodimers and heterodimers. Interacts with the auxin-responsive proteins IAA1 and IAA12 (BODENLOS). Interacts (via PB1 domain) with IAA17 (via PB1 domain). Interacts with IAA19. Interacts with ARF5. Binds to JMJ30. Binds to ATXR2 in the nucleus. In terms of tissue distribution, expressed in the whole plant.

The protein localises to the nucleus. Functionally, auxin response factors (ARFs) are transcriptional factors that bind specifically to the DNA sequence 5'-TGTCTC-3' found in the auxin-responsive promoter elements (AuxREs). Acts as a transcriptional activator of several tropic stimulus-induced (TSI) genes, including SAUR50. Formation of heterodimers with Aux/IAA proteins may alter their ability to modulate early auxin response genes expression. Required for differential growth responses of aerial tissues. Involved in ethylene responses. Regulates lateral root formation through direct regulation of LBD16 and/or LBD29. Functionally redundant with ARF19. Mediates embryo axis formation and vascular tissues differentiation. Functionally redundant with ARF5. Involved in cellular dedifferentiation during callus formation on callus-inducing medium (CIM) and in an ATXR2-dependent manner. This is Auxin response factor 7 from Arabidopsis thaliana (Mouse-ear cress).